Consider the following 162-residue polypeptide: SsrA-binding protein (162 aa).

The tract at residues 140–162 is disordered; sequence EDRRHDIKERETKREMDRAMRRR.

This sequence belongs to the SmpB family.

The protein resides in the cytoplasm. In terms of biological role, required for rescue of stalled ribosomes mediated by trans-translation. Binds to transfer-messenger RNA (tmRNA), required for stable association of tmRNA with ribosomes. tmRNA and SmpB together mimic tRNA shape, replacing the anticodon stem-loop with SmpB. tmRNA is encoded by the ssrA gene; the 2 termini fold to resemble tRNA(Ala) and it encodes a 'tag peptide', a short internal open reading frame. During trans-translation Ala-aminoacylated tmRNA acts like a tRNA, entering the A-site of stalled ribosomes, displacing the stalled mRNA. The ribosome then switches to translate the ORF on the tmRNA; the nascent peptide is terminated with the 'tag peptide' encoded by the tmRNA and targeted for degradation. The ribosome is freed to recommence translation, which seems to be the essential function of trans-translation. This is SsrA-binding protein from Myxococcus xanthus (strain DK1622).